A 362-amino-acid chain; its full sequence is Probable non-structural 41.0 kDa protein (362 aa).

The segment at 341–362 (MNAAAPSAPTPTELPVFSPPSS) is disordered.

This Maize rough dwarf virus (MRDV) protein is Probable non-structural 41.0 kDa protein (S6).